The chain runs to 185 residues: Potassium-transporting ATPase KdpC subunit 2 (185 aa).

A helical membrane pass occupies residues 8 to 28; the sequence is LGLVLIMFVLCGFIFPLTVTA.

The protein belongs to the KdpC family. As to quaternary structure, the system is composed of three essential subunits: KdpA, KdpB and KdpC.

The protein localises to the cell membrane. It is found in the membrane raft. Part of the high-affinity ATP-driven potassium transport (or Kdp) system, which catalyzes the hydrolysis of ATP coupled with the electrogenic transport of potassium into the cytoplasm. This subunit acts as a catalytic chaperone that increases the ATP-binding affinity of the ATP-hydrolyzing subunit KdpB by the formation of a transient KdpB/KdpC/ATP ternary complex. The protein is Potassium-transporting ATPase KdpC subunit 2 of Staphylococcus aureus (strain Mu50 / ATCC 700699).